The primary structure comprises 575 residues: Arginine--tRNA ligase (575 aa).

The 'HIGH' region motif lies at 131–141; that stretch reads ANPNGPLHIGH.

It belongs to the class-I aminoacyl-tRNA synthetase family.

It is found in the cytoplasm. It carries out the reaction tRNA(Arg) + L-arginine + ATP = L-arginyl-tRNA(Arg) + AMP + diphosphate. The protein is Arginine--tRNA ligase of Methanobrevibacter smithii (strain ATCC 35061 / DSM 861 / OCM 144 / PS).